Here is a 334-residue protein sequence, read N- to C-terminus: Holliday junction branch migration complex subunit RuvB (334 aa).

Residues 4 to 184 (ADRLISAGVI…FGIVQRLEFY (181 aa)) form a large ATPase domain (RuvB-L) region. ATP is bound by residues Ile-23, Arg-24, Gly-65, Lys-68, Thr-69, Thr-70, 131–133 (EDY), Arg-174, Tyr-184, and Arg-221. Thr-69 serves as a coordination point for Mg(2+). Residues 185–255 (QVADLEHIVS…VAMKALDMLN (71 aa)) are small ATPAse domain (RuvB-S). Residues 258-334 (AEGFDFMDRK…YKHFGITREE (77 aa)) form a head domain (RuvB-H) region. Residues Arg-294, Arg-313, and Arg-318 each contribute to the DNA site.

The protein belongs to the RuvB family. In terms of assembly, homohexamer. Forms an RuvA(8)-RuvB(12)-Holliday junction (HJ) complex. HJ DNA is sandwiched between 2 RuvA tetramers; dsDNA enters through RuvA and exits via RuvB. An RuvB hexamer assembles on each DNA strand where it exits the tetramer. Each RuvB hexamer is contacted by two RuvA subunits (via domain III) on 2 adjacent RuvB subunits; this complex drives branch migration. In the full resolvosome a probable DNA-RuvA(4)-RuvB(12)-RuvC(2) complex forms which resolves the HJ.

It is found in the cytoplasm. The enzyme catalyses ATP + H2O = ADP + phosphate + H(+). Functionally, the RuvA-RuvB-RuvC complex processes Holliday junction (HJ) DNA during genetic recombination and DNA repair, while the RuvA-RuvB complex plays an important role in the rescue of blocked DNA replication forks via replication fork reversal (RFR). RuvA specifically binds to HJ cruciform DNA, conferring on it an open structure. The RuvB hexamer acts as an ATP-dependent pump, pulling dsDNA into and through the RuvAB complex. RuvB forms 2 homohexamers on either side of HJ DNA bound by 1 or 2 RuvA tetramers; 4 subunits per hexamer contact DNA at a time. Coordinated motions by a converter formed by DNA-disengaged RuvB subunits stimulates ATP hydrolysis and nucleotide exchange. Immobilization of the converter enables RuvB to convert the ATP-contained energy into a lever motion, pulling 2 nucleotides of DNA out of the RuvA tetramer per ATP hydrolyzed, thus driving DNA branch migration. The RuvB motors rotate together with the DNA substrate, which together with the progressing nucleotide cycle form the mechanistic basis for DNA recombination by continuous HJ branch migration. Branch migration allows RuvC to scan DNA until it finds its consensus sequence, where it cleaves and resolves cruciform DNA. The protein is Holliday junction branch migration complex subunit RuvB of Yersinia enterocolitica serotype O:8 / biotype 1B (strain NCTC 13174 / 8081).